A 93-amino-acid polypeptide reads, in one-letter code: U12-lycotoxin-Ls1a (93 aa).

The N-terminal stretch at 1–18 (MKFAVILLFSLVVLTVAS) is a signal peptide. Positions 19–38 (ESVEEVRREIDIEDLPEQQR) are excised as a propeptide.

The protein belongs to the neurotoxin 31 family. Contains 5 disulfide bonds. As to expression, expressed by the venom gland.

It localises to the secreted. This is U12-lycotoxin-Ls1a from Lycosa singoriensis (Wolf spider).